A 103-amino-acid chain; its full sequence is Large ribosomal subunit protein bL21 (103 aa).

This sequence belongs to the bacterial ribosomal protein bL21 family. As to quaternary structure, part of the 50S ribosomal subunit. Contacts protein L20.

In terms of biological role, this protein binds to 23S rRNA in the presence of protein L20. The protein is Large ribosomal subunit protein bL21 of Yersinia enterocolitica serotype O:8 / biotype 1B (strain NCTC 13174 / 8081).